The chain runs to 831 residues: Multiphosphoryl transfer protein 1 (831 aa).

In terms of domain architecture, HPr spans 1 to 90 (MLTIQFLCPL…EYIQVRFIDS (90 aa)). His-15 serves as the catalytic Pros-phosphohistidine intermediate; for HPr activity. At His-15 the chain carries Phosphohistidine; by EI. Residues 119 to 650 (GNVLASGVGV…AVKSQLRQLD (532 aa)) are PTS EI. Catalysis depends on His-298, which acts as the Tele-phosphohistidine intermediate; for PTS EI activity. His-298 carries the post-translational modification Phosphohistidine; by autocatalysis. Positions 405 and 441 each coordinate phosphoenolpyruvate. Positions 540 and 564 each coordinate Mg(2+). Phosphoenolpyruvate contacts are provided by residues 563–564 (ND) and Arg-574. The active-site Proton donor; for EI activity is Cys-611. A PTS EIIA type-2 domain is found at 685-828 (PLLALENIFV…QSILTLLETE (144 aa)). His-747 (tele-phosphohistidine intermediate; for PTS EIIA activity) is an active-site residue. His-747 is subject to Phosphohistidine; by HPr.

It belongs to the PEP-utilizing enzyme family. Mg(2+) is required as a cofactor.

It localises to the cytoplasm. The catalysed reaction is L-histidyl-[protein] + phosphoenolpyruvate = N(pros)-phospho-L-histidyl-[protein] + pyruvate. The enzyme catalyses D-fructose(out) + N(pros)-phospho-L-histidyl-[protein] = D-fructose 1-phosphate(in) + L-histidyl-[protein]. Multifunctional protein that includes general (non sugar-specific) and sugar-specific components of the phosphoenolpyruvate-dependent sugar phosphotransferase system (sugar PTS). This major carbohydrate active transport system catalyzes the phosphorylation of incoming sugar substrates concomitantly with their translocation across the cell membrane. The enzyme II FryABC PTS system is involved in fructose transport. The protein is Multiphosphoryl transfer protein 1 (fryA) of Escherichia coli (strain K12).